Consider the following 317-residue polypeptide: MGEVQREKVAVIIGPTAVGKTKLSIDLAKALNGEIISGDSMQIYRTMDIGTAKVTKAEMDGIPHYMIDIKNPEDSFSVAEFQERVRKHIREITERGKLPIIVGGTGLYIQSVLFDYQFTDDAGDVIYREQMEKLALERGVEYVHKKLQEVDPESAERIHANNVRRVIRALEIFHMTGEKMSDQIEKQEKELLYDVSLIGLTMDREMLYDRINLRVDLMMEQGLLEEVEGLYNRGIRDCQSIQAIGYKEIYDYFENRASLEDAVSQLKTNSRRYAKRQLTWFRNKMDVTWFDVTDGEKTSEILRYIEGKLQVKSNNSK.

14–21 (GPTAVGKT) contributes to the ATP binding site. 16–21 (TAVGKT) contacts substrate. Positions 39 to 42 (DSMQ) are interaction with substrate tRNA.

This sequence belongs to the IPP transferase family. In terms of assembly, monomer. It depends on Mg(2+) as a cofactor.

It carries out the reaction adenosine(37) in tRNA + dimethylallyl diphosphate = N(6)-dimethylallyladenosine(37) in tRNA + diphosphate. Catalyzes the transfer of a dimethylallyl group onto the adenine at position 37 in tRNAs that read codons beginning with uridine, leading to the formation of N6-(dimethylallyl)adenosine (i(6)A). In Bacillus cereus (strain B4264), this protein is tRNA dimethylallyltransferase.